Consider the following 248-residue polypeptide: Stress-related protein (248 aa).

This sequence belongs to the REF/SRPP family.

This chain is Stress-related protein (SRP), found in Vitis riparia (Frost grape).